A 452-amino-acid polypeptide reads, in one-letter code: tRNA modification GTPase MnmE (452 aa).

3 residues coordinate (6S)-5-formyl-5,6,7,8-tetrahydrofolate: Arg23, Glu81, and Lys120. A TrmE-type G domain is found at 217 to 373; the sequence is GIKTAIIGQT…LVLRINQMYL (157 aa). Residue Asn227 participates in K(+) binding. GTP contacts are provided by residues 227–232, 246–252, and 271–274; these read NVGKSS, TDIPGTT, and DTAG. Ser231 is a Mg(2+) binding site. K(+)-binding residues include Thr246, Ile248, and Thr251. Thr252 is a binding site for Mg(2+). Residue Lys452 coordinates (6S)-5-formyl-5,6,7,8-tetrahydrofolate.

It belongs to the TRAFAC class TrmE-Era-EngA-EngB-Septin-like GTPase superfamily. TrmE GTPase family. In terms of assembly, homodimer. Heterotetramer of two MnmE and two MnmG subunits. K(+) is required as a cofactor.

The protein resides in the cytoplasm. Exhibits a very high intrinsic GTPase hydrolysis rate. Involved in the addition of a carboxymethylaminomethyl (cmnm) group at the wobble position (U34) of certain tRNAs, forming tRNA-cmnm(5)s(2)U34. The sequence is that of tRNA modification GTPase MnmE from Mycoplasma mycoides subsp. mycoides SC (strain CCUG 32753 / NCTC 10114 / PG1).